Consider the following 1294-residue polypeptide: von Willebrand factor A domain-containing protein 3B (1294 aa).

One can recognise a VWFA domain in the interval 508–684 (CIYILIDTSH…EDLTLLVKEM (177 aa)). 4 disordered regions span residues 732–754 (CAKP…KGPW), 778–803 (RSQM…SSRR), 1012–1036 (APGE…DPLK), and 1193–1247 (DTQD…PRTA). A compositionally biased stretch (polar residues) spans 738–748 (DVDSTQTSSLN). Residues 778–787 (RSQMSSLRSS) are compositionally biased toward low complexity. The span at 1193 to 1202 (DTQDSREPRR) shows a compositional bias: basic and acidic residues. Basic residues predominate over residues 1203-1212 (EKPRRKKRPA). Low complexity predominate over residues 1213-1236 (KQPLQQAAPSDSDGSSHGISSHGS).

Its subcellular location is the cytoplasm. This chain is von Willebrand factor A domain-containing protein 3B (VWA3B), found in Homo sapiens (Human).